Reading from the N-terminus, the 189-residue chain is Inner membrane-spanning protein YciB (189 aa).

5 helical membrane passes run 3-23 (LLID…WGIY), 47-67 (IEPM…ATLL), 76-96 (WKPT…QLFF), 121-141 (WSWT…AHAF), and 149-169 (FKLF…ALYL).

Belongs to the YciB family.

The protein localises to the cell inner membrane. In terms of biological role, plays a role in cell envelope biogenesis, maintenance of cell envelope integrity and membrane homeostasis. The polypeptide is Inner membrane-spanning protein YciB (Paracidovorax citrulli (strain AAC00-1) (Acidovorax citrulli)).